The primary structure comprises 214 residues: Probable nicotinate-nucleotide adenylyltransferase (214 aa).

The protein belongs to the NadD family.

The catalysed reaction is nicotinate beta-D-ribonucleotide + ATP + H(+) = deamido-NAD(+) + diphosphate. Its pathway is cofactor biosynthesis; NAD(+) biosynthesis; deamido-NAD(+) from nicotinate D-ribonucleotide: step 1/1. Its function is as follows. Catalyzes the reversible adenylation of nicotinate mononucleotide (NaMN) to nicotinic acid adenine dinucleotide (NaAD). This chain is Probable nicotinate-nucleotide adenylyltransferase, found in Pseudomonas fluorescens (strain ATCC BAA-477 / NRRL B-23932 / Pf-5).